The following is a 90-amino-acid chain: UPF0298 protein SSU98_1559 (90 aa).

This sequence belongs to the UPF0298 family.

It is found in the cytoplasm. This Streptococcus suis (strain 98HAH33) protein is UPF0298 protein SSU98_1559.